Reading from the N-terminus, the 206-residue chain is Large ribosomal subunit protein uL4 (206 aa).

Residues 63–97 (MYKQKGTGRARHHSARAPQFRGGGKAHGPVVRSHE) form a disordered region. Basic residues predominate over residues 64-77 (YKQKGTGRARHHSA).

The protein belongs to the universal ribosomal protein uL4 family. In terms of assembly, part of the 50S ribosomal subunit.

Its function is as follows. One of the primary rRNA binding proteins, this protein initially binds near the 5'-end of the 23S rRNA. It is important during the early stages of 50S assembly. It makes multiple contacts with different domains of the 23S rRNA in the assembled 50S subunit and ribosome. Forms part of the polypeptide exit tunnel. This Rhizobium etli (strain ATCC 51251 / DSM 11541 / JCM 21823 / NBRC 15573 / CFN 42) protein is Large ribosomal subunit protein uL4.